The primary structure comprises 364 residues: MTKSHVIFSASIALFLLLSISHFPGALSQSNKDCQSKSNYSCIDKNKALDLKLLSIFSILITSLIGVCLPFFARSIPAFQPEKSHFLIVKSFASGIILSTGFMHVLPDSFEMLSSPCLNDNPWHKFPFAGFVAMMSAVFTLMVDSITTSVFTKSGRKDLRADVASVETPDQEIGHVQVHGHVHSHTLPHNLHGENDKELGSYLQLLRYRILAIVLELGIVVQSIVIGLSVGDTNNTCTIKGLVAALCFHQMFEGMGLGGCILQAEYGWVKKAVMAFFFAVTTPFGVVLGMALSKTYKENSPESLITVGLLNASSAGLLIYMALVDLLAADFMGQKMQRSIKLQLKSYAAVLLGAGGMSVMAKWA.

The N-terminal stretch at 1 to 28 is a signal peptide; sequence MTKSHVIFSASIALFLLLSISHFPGALS. The Extracellular segment spans residues 29–52; sequence QSNKDCQSKSNYSCIDKNKALDLK. Residues 53-73 form a helical membrane-spanning segment; sequence LLSIFSILITSLIGVCLPFFA. Topologically, residues 74-85 are cytoplasmic; it reads RSIPAFQPEKSH. Residues 86–106 form a helical membrane-spanning segment; the sequence is FLIVKSFASGIILSTGFMHVL. Residues 107–125 lie on the Extracellular side of the membrane; sequence PDSFEMLSSPCLNDNPWHK. A helical transmembrane segment spans residues 126 to 146; that stretch reads FPFAGFVAMMSAVFTLMVDSI. At 147-209 the chain is on the cytoplasmic side; the sequence is TTSVFTKSGR…GSYLQLLRYR (63 aa). The chain crosses the membrane as a helical span at residues 210–230; the sequence is ILAIVLELGIVVQSIVIGLSV. Residues 231 to 241 are Extracellular-facing; it reads GDTNNTCTIKG. A helical transmembrane segment spans residues 242-262; that stretch reads LVAALCFHQMFEGMGLGGCIL. Over 263-271 the chain is Cytoplasmic; it reads QAEYGWVKK. Residues 272-292 traverse the membrane as a helical segment; sequence AVMAFFFAVTTPFGVVLGMAL. The Extracellular segment spans residues 293-303; that stretch reads SKTYKENSPES. Residues 304–324 traverse the membrane as a helical segment; the sequence is LITVGLLNASSAGLLIYMALV. Topologically, residues 325–343 are cytoplasmic; sequence DLLAADFMGQKMQRSIKLQ. Residues 344 to 364 traverse the membrane as a helical segment; sequence LKSYAAVLLGAGGMSVMAKWA.

Belongs to the ZIP transporter (TC 2.A.5) family.

The protein localises to the cell membrane. Its function is as follows. Probably mediates zinc uptake from the rhizosphere. The sequence is that of Probable zinc transporter 10 (ZIP10) from Arabidopsis thaliana (Mouse-ear cress).